A 244-amino-acid polypeptide reads, in one-letter code: LOB domain-containing protein 17 (244 aa).

In terms of domain architecture, LOB spans 6-108; that stretch reads SPCGACKFLR…TQLEILKQQA (103 aa).

Belongs to the LOB domain-containing protein family. In terms of tissue distribution, expressed in roots, stems, leaves and flowers.

In Arabidopsis thaliana (Mouse-ear cress), this protein is LOB domain-containing protein 17 (LBD17).